Here is an 80-residue protein sequence, read N- to C-terminus: Large ribosomal subunit protein bL31B (80 aa).

It belongs to the bacterial ribosomal protein bL31 family. Type B subfamily. As to quaternary structure, part of the 50S ribosomal subunit.

The protein is Large ribosomal subunit protein bL31B of Streptococcus sanguinis (strain SK36).